Here is a 68-residue protein sequence, read N- to C-terminus: Large ribosomal subunit protein uL29 (68 aa).

This sequence belongs to the universal ribosomal protein uL29 family.

This chain is Large ribosomal subunit protein uL29, found in Streptococcus pneumoniae (strain JJA).